Consider the following 163-residue polypeptide: MFKTYSKSFACILFCIFNIFVVSASAIDLDEATRTVVTDSSGNTTVLTPEQVKRGKRLFNATCGACHTGGITKTNPNVGLDPEALSLATPRRDNISALVDYLKNPTTYDGLESIAEIHPSIKSADIYPRMRSLTDEDLYSIAGHIMLQPKIVAEKWGGGKIYF.

The N-terminal stretch at 1 to 26 (MFKTYSKSFACILFCIFNIFVVSASA) is a signal peptide. Heme c is bound by residues cysteine 63, cysteine 66, histidine 67, and methionine 130.

Belongs to the cytochrome c family. PsbV subfamily. As to quaternary structure, PSII is composed of 1 copy each of membrane proteins PsbA, PsbB, PsbC, PsbD, PsbE, PsbF, PsbH, PsbI, PsbJ, PsbK, PsbL, PsbM, PsbT, PsbY, PsbZ, Psb30/Ycf12, at least 3 peripheral proteins of the oxygen-evolving complex and a large number of cofactors. It forms dimeric complexes. Heme c serves as cofactor.

Its subcellular location is the plastid. The protein localises to the chloroplast thylakoid membrane. One of the extrinsic, lumenal subunits of photosystem II (PSII). PSII is a light-driven water plastoquinone oxidoreductase, using light energy to abstract electrons from H(2)O, generating a proton gradient subsequently used for ATP formation. The extrinsic proteins stabilize the structure of photosystem II oxygen-evolving complex (OEC), the ion environment of oxygen evolution and protect the OEC against heat-induced inactivation. The polypeptide is Photosystem II extrinsic protein V (Thalassiosira pseudonana (Marine diatom)).